A 150-amino-acid chain; its full sequence is Large ribosomal subunit protein bL9 (150 aa).

Belongs to the bacterial ribosomal protein bL9 family.

In terms of biological role, binds to the 23S rRNA. This chain is Large ribosomal subunit protein bL9, found in Streptococcus pyogenes serotype M3 (strain SSI-1).